The chain runs to 344 residues: Anthranilate phosphoribosyltransferase (344 aa).

5-phospho-alpha-D-ribose 1-diphosphate-binding positions include glycine 79, 82-83, threonine 87, 89-92, 107-115, and serine 119; these read GD, NIST, and KHGNRSVSS. Glycine 79 contacts anthranilate. Residue serine 91 coordinates Mg(2+). An anthranilate-binding site is contributed by asparagine 110. Arginine 165 provides a ligand contact to anthranilate. Mg(2+)-binding residues include aspartate 224 and glutamate 225.

The protein belongs to the anthranilate phosphoribosyltransferase family. Homodimer. The cofactor is Mg(2+).

The enzyme catalyses N-(5-phospho-beta-D-ribosyl)anthranilate + diphosphate = 5-phospho-alpha-D-ribose 1-diphosphate + anthranilate. It functions in the pathway amino-acid biosynthesis; L-tryptophan biosynthesis; L-tryptophan from chorismate: step 2/5. Catalyzes the transfer of the phosphoribosyl group of 5-phosphorylribose-1-pyrophosphate (PRPP) to anthranilate to yield N-(5'-phosphoribosyl)-anthranilate (PRA). In Salinibacter ruber (strain DSM 13855 / M31), this protein is Anthranilate phosphoribosyltransferase.